A 361-amino-acid polypeptide reads, in one-letter code: Probable dual-specificity RNA methyltransferase RlmN (361 aa).

Glu91 (proton acceptor) is an active-site residue. Residues 97–329 form the Radical SAM core domain; the sequence is QHYGLSVCVT…KKKGVNCVVR (233 aa). Residues Cys104 and Cys340 are joined by a disulfide bond. Residues Cys111, Cys115, and Cys118 each coordinate [4Fe-4S] cluster. S-adenosyl-L-methionine is bound by residues 163-164, Ser195, 218-220, and Asn296; these read GE and SLH. Cys340 acts as the S-methylcysteine intermediate in catalysis.

Belongs to the radical SAM superfamily. RlmN family. [4Fe-4S] cluster serves as cofactor.

It localises to the cytoplasm. It catalyses the reaction adenosine(2503) in 23S rRNA + 2 reduced [2Fe-2S]-[ferredoxin] + 2 S-adenosyl-L-methionine = 2-methyladenosine(2503) in 23S rRNA + 5'-deoxyadenosine + L-methionine + 2 oxidized [2Fe-2S]-[ferredoxin] + S-adenosyl-L-homocysteine. The catalysed reaction is adenosine(37) in tRNA + 2 reduced [2Fe-2S]-[ferredoxin] + 2 S-adenosyl-L-methionine = 2-methyladenosine(37) in tRNA + 5'-deoxyadenosine + L-methionine + 2 oxidized [2Fe-2S]-[ferredoxin] + S-adenosyl-L-homocysteine. In terms of biological role, specifically methylates position 2 of adenine 2503 in 23S rRNA and position 2 of adenine 37 in tRNAs. In Streptococcus pneumoniae serotype 4 (strain ATCC BAA-334 / TIGR4), this protein is Probable dual-specificity RNA methyltransferase RlmN.